Here is a 149-residue protein sequence, read N- to C-terminus: MTTAQHEGEQTVAAAAKIAMSSVAPSHRQGGSTRALLTPSSVGATSGFLGHIELAPGESVTEHYHPFSDKYLYLIEGSLVVRVNGEEVRLERDEALFVTRGQRHRIENRGNVPARVVFQISPLAPRPELGHVDTEPVPNPAAAPPKVGG.

A Cupin type-2 domain is found at 51-117 (HIELAPGESV…NRGNVPARVV (67 aa)). The disordered stretch occupies residues 127–149 (PELGHVDTEPVPNPAAAPPKVGG).

The tetracenomycin polyketide synthase (TCM PKS) is composed of a ketosynthase complex (TcmKL), an acyl carrier protein (TcmM), a cyclase (TcmN) and a probable second cyclase (TcmJ).

It carries out the reaction 10 malonyl-CoA + 8 H(+) = tetracenomycin F2 + 10 CO2 + 10 CoA + 2 H2O. Its pathway is antibiotic biosynthesis; tetracenomycin C biosynthesis. In terms of biological role, involved in the biosynthesis of tetracenomycin C (TCM C). Part of a type II polyketide synthase (PKS) that catalyzes the synthesis of tetracenomycin F2 (TCM F2), a precursor of TCM C, from malonyl-CoA. TcmJ, while not absolutely required, greatly increases the tetracenomycin F2 production. It probably acts as a cyclase. This is Tetracenomycin polyketide synthase protein TcmJ from Streptomyces glaucescens.